Reading from the N-terminus, the 301-residue chain is NTE family protein RssA (301 aa).

The PNPLA domain occupies 8-168 (LALGSGAARG…VNPIPISLTR (161 aa)). The short motif at 39–43 (GCSIG) is the GXSXG element. Catalysis depends on serine 41, which acts as the Nucleophile. The Proton acceptor role is filled by aspartate 155. Positions 155-157 (DGA) match the DGA/G motif.

Belongs to the NTE family.

This is NTE family protein RssA (rssA) from Escherichia coli (strain K12).